A 101-amino-acid polypeptide reads, in one-letter code: Apolipoprotein C-II (101 aa).

The N-terminal stretch at 1 to 22 (MGIRYLLVLVLVLLVLGCEVQG) is a signal peptide. The tract at residues 66 to 74 (TVDEKIREI) is lipid binding. Positions 78 to 101 (STAAVSTYAGIFTDQLLSMLKGDQ) are lipoprotein lipase cofactor.

This sequence belongs to the apolipoprotein C2 family. In terms of processing, proapolipoprotein C-II is synthesized as a sialic acid containing glycoprotein which is subsequently desialylated prior to its proteolytic processing. Proapolipoprotein C-II, the major form found in plasma undergoes proteolytic cleavage of its N-terminal hexapeptide to generate apolipoprotein C-II, which occurs as the minor form in plasma.

It localises to the secreted. Functionally, component of chylomicrons, very low-density lipoproteins (VLDL), low-density lipoproteins (LDL), and high-density lipoproteins (HDL) in plasma. Plays an important role in lipoprotein metabolism as an activator of lipoprotein lipase. Both proapolipoprotein C-II and apolipoprotein C-II can activate lipoprotein lipase. This is Apolipoprotein C-II (APOC2) from Mirounga angustirostris (Northern elephant seal).